A 331-amino-acid chain; its full sequence is Small ribosomal subunit protein uS2 (331 aa).

It belongs to the universal ribosomal protein uS2 family.

The polypeptide is Small ribosomal subunit protein uS2 (Rhodopseudomonas palustris (strain HaA2)).